A 429-amino-acid chain; its full sequence is MMSHPCVSLLGVPVLNPALVPHLAQGQVLLVSDPSPNTDPAKYSESTSATRHQMKGEDAQPQEMASTSFPRASGPSPEFRQHGDSDGKRGSPQNLPIEHHFACKECGDTFRLKVLLVQHQRVHSEEKGWECGDCGKVFRGVAEFNEHRKSHVAAEPQPGPSRALENAAEKREQMEREAKPFECEECGKRFKKNAGLSQHLRVHSREKPFDCEECGRSFKVNTHLFRHQKLHTSEKPFACKACSRDFLDRQELLKHQRMHTGHLPFDCDDCGKSFRGVNGLAEHQRIHSGAKPYGCPHCGKLFRRSSELTKHRRIHTGEKPYACGQCGKAFRQSSSLLEHARIHSGERPYACGECGKAFRGPSDLIKHRRIHSGLKPYECDKCGKAFRRSSGLSRHRRIHSGARRCECSQCGRVFKRRSALQKHQPTHHE.

The tract at residues 31 to 95 is disordered; that stretch reads VSDPSPNTDP…DGKRGSPQNL (65 aa). The span at 34-51 shows a compositional bias: polar residues; it reads PSPNTDPAKYSESTSATR. Ser-76 is modified (phosphoserine). Residues 79-89 are compositionally biased toward basic and acidic residues; it reads FRQHGDSDGKR. 2 C2H2-type zinc fingers span residues 101-123 and 129-151; these read FACK…QRVH and WECG…RKSH. The disordered stretch occupies residues 149–176; it reads KSHVAAEPQPGPSRALENAAEKREQMER. Over residues 167 to 176 the composition is skewed to basic and acidic residues; sequence AAEKREQMER. 9 consecutive C2H2-type zinc fingers follow at residues 181-203, 209-231, 237-259, 265-287, 293-315, 321-343, 349-371, 377-399, and 405-427; these read FECE…LRVH, FDCE…QKLH, FACK…QRMH, FDCD…QRIH, YGCP…RRIH, YACG…ARIH, YACG…RRIH, YECD…RRIH, and CECS…QPTH.

It belongs to the krueppel C2H2-type zinc-finger protein family.

Its subcellular location is the nucleus. May be involved in transcriptional regulation. In Homo sapiens (Human), this protein is Zinc finger protein 275 (ZNF275).